Reading from the N-terminus, the 446-residue chain is MGKNVLLLGSGFVAQPVIDTLAANDDINVTVACRTLANAQALAKPSGSKAISLDVTDDSALDKVLADNDVVISLIPYTFHPNVVKSAIRTKTDVVTSSYISPALRELEPEIVKAGITVMNEIGLDPGIDHLYAVKTIDEVHRAGGKLKSFLSYCGGLPAPEDSDNPLGYKFSWSSRGVLLALRNSAKYWKDGKIETVSSEDLMATAKPYFIYPGYAFVCYPNRDSTLFKDLYHIPEAETVIRGTLRYQGFPEFVKALVDMGMLKDDANEIFSKPIAWNEALKQYLGAKSTSKEDLIASIDSKATWKDDEDRERILSGFAWLGLFSDAKITPRGNALDTLCARLEELMQYEDNERDMVVLQHKFGIEWADGTTETRTSTLVDYGKVGGYSSMAATVGYPVAIATKFVLDGTIKGPGLLAPYSPEINDPIMKELKDKYGIYLKEKTVA.

NADP(+) is bound by residues 10–13, 33–35, 54–55, I75, 97–98, 124–126, and S174; these read SGFV, CRT, DV, SS, and LDP. Residues 98–99 and D125 each bind L-saccharopine; that span reads SY. L-saccharopine contacts are provided by residues R223 and 244–246; that span reads TLR.

Belongs to the saccharopine dehydrogenase family. As to quaternary structure, interacts with TRM112.

It carries out the reaction L-saccharopine + NADP(+) + H2O = (S)-2-amino-6-oxohexanoate + L-glutamate + NADPH + H(+). It functions in the pathway amino-acid biosynthesis; L-lysine biosynthesis via AAA pathway; L-lysine from L-alpha-aminoadipate (fungal route): step 2/3. The sequence is that of Saccharopine dehydrogenase [NADP(+), L-glutamate-forming] (LYS9) from Saccharomyces cerevisiae (strain ATCC 204508 / S288c) (Baker's yeast).